We begin with the raw amino-acid sequence, 322 residues long: MSSSEEDDGYVPFSKRPEWSDVKPLAQDDGPHPICPILYSEVFKDKMNYFRAILKSKEKSLRVLDLLEEVIQENPSNYTIWYYRREVLKAIEQDETIEYDIQQEMNLLNDMGETDPKNYQIWNHRRFIVEKYIGSDNKEKEFLSGVLLEDAKNYHAWSHRQWLLKTYRDWNGELAMVDKLLSLDHRNNSVWNHRFFVISNLNPSPFPLSLIEREVEFAFNHIRHSPNNESPWSYLKGLFKGQKISTIYPSLLDILLEMKSKYIGCSHVNSIILDIYQEQNTKISLENSLNICKLLSETIDPIHKNYWNFKYNTISDQLKLIN.

Residues 1–27 form a disordered region; the sequence is MSSSEEDDGYVPFSKRPEWSDVKPLAQ. 6 PFTA repeats span residues 62–95, 103–136, 138–171, 173–205, 213–246, and 287–321; these read RVLD…EQDE, QEMN…IGSD, KEKE…RDWN, ELAM…NPSP, REVE…KIST, and NSLN…LKLI.

Belongs to the protein prenyltransferase subunit alpha family. Heterodimer of fntA and fntB (farnesyltransferase). Heterodimer of an alpha and a beta subunit. Mg(2+) is required as a cofactor.

The catalysed reaction is L-cysteinyl-[protein] + (2E,6E)-farnesyl diphosphate = S-(2E,6E)-farnesyl-L-cysteinyl-[protein] + diphosphate. It carries out the reaction geranylgeranyl diphosphate + L-cysteinyl-[protein] = S-geranylgeranyl-L-cysteinyl-[protein] + diphosphate. Its function is as follows. Catalyzes the transfer of a farnesyl or geranyl-geranyl moiety from farnesyl or geranyl-geranyl diphosphate to a cysteine at the fourth position from the C-terminus of several proteins having the C-terminal sequence Cys-aliphatic-aliphatic-X. The alpha subunit is thought to participate in a stable complex with the substrate. The beta subunit binds the peptide substrate. The polypeptide is Protein farnesyltransferase/geranylgeranyltransferase type-1 subunit alpha (fntA) (Dictyostelium discoideum (Social amoeba)).